The following is a 133-amino-acid chain: uncharacterized protein (133 aa).

The protein belongs to the ycf68 family.

The protein resides in the plastid. It is found in the chloroplast. This is an uncharacterized protein from Oryza sativa subsp. japonica (Rice).